Reading from the N-terminus, the 338-residue chain is MVQITKGKFDGLQRLSNEKGVIAALAIDQRGSLKKMIQQAKGTENKKDVEDFKQLVSEELTPYASAILLDLEYGTPAIKARHEGSGLLTSYEKTGYDATTPGKLPDLIEDLSALRIKENGGDAVKILVYYDPDEPAEINEIKYAFLERIGAECRAVDIPFFLEPITYDAKVTDSGSLEYAKLKPAKVKASIKEFSKPRYGVDVLKLEVPVNFKYVEGFAEGEVAYTQDEAARHFEECSDLSPLPFIYLSAGVTSEMFHKTIQFANQHNVQYSGVLCGRATWADGIEVYGKQGDDALREWLRTQGKENITSLDKLLDEGAVPWWTKYGSFEDVHVVEKQ.

It belongs to the aldolase LacD family.

It catalyses the reaction D-tagatofuranose 1,6-bisphosphate = D-glyceraldehyde 3-phosphate + dihydroxyacetone phosphate. It participates in carbohydrate metabolism; D-tagatose 6-phosphate degradation; D-glyceraldehyde 3-phosphate and glycerone phosphate from D-tagatose 6-phosphate: step 2/2. This Listeria monocytogenes serotype 4a (strain HCC23) protein is Tagatose 1,6-diphosphate aldolase.